The sequence spans 488 residues: Zinc finger protein 92 (488 aa).

Residues Val-14–Ser-85 form the KRAB domain. 6 C2H2-type zinc fingers span residues Tyr-141–His-163, Tyr-169–His-191, Tyr-197–His-219, Phe-225–His-247, Phe-253–His-275, and Tyr-281–His-303. A C2H2-type 7; degenerate zinc finger spans residues Phe-309–His-331. The segment at Tyr-337–His-359 adopts a C2H2-type 8 zinc-finger fold. The tract at residues Gln-387 to Lys-408 is disordered. The segment at Gln-410–His-432 adopts a C2H2-type 9 zinc-finger fold. The interval Glu-435–Pro-488 is disordered.

The protein belongs to the krueppel C2H2-type zinc-finger protein family. In terms of tissue distribution, highly expressed in pancreatic islets.

The protein localises to the nucleus. KRAB domain-containing zinc-finger protein that represses B1/Alu SINE transposable elements and modulates the transcription of nearby genes in a tissue-specific manner. It regulates glucose homeostasis and lipid metabolism by modulating the expression of the endocrine cell-defining transcription factor, MAFB, in pancreatic islets and, the fat metabolism regulator, ACACB, in adipose tissue and muscle. This Mus musculus (Mouse) protein is Zinc finger protein 92 (Zfp92).